A 2198-amino-acid polypeptide reads, in one-letter code: Activating signal cointegrator 1 complex subunit 3 (2198 aa).

Serine 12 carries the phosphoserine modification. 2 coiled-coil regions span residues 18–81 and 328–356; these read KQDN…KQIV and IQSE…KAGE. One can recognise a Helicase ATP-binding 1 domain in the interval 487–670; it reads ETAYNTNENM…FLHVNPYIGL (184 aa). 500-507 lines the ATP pocket; it reads APTGAGKT. Lysine 573 is subject to N6-acetyllysine. The short motif at 612–615 is the DEVH box element; that stretch reads DEVH. Residues 697 to 915 enclose the Helicase C-terminal 1 domain; that stretch reads QLNNMDEVCY…GTVTNVEEAV (219 aa). One can recognise an SEC63 1 domain in the interval 979–1288; the sequence is STDLGRTASH…GAEAVCIINF (310 aa). The Helicase ATP-binding 2 domain maps to 1337–1512; sequence HTLYHTDCNV…WLNIKQMGLF (176 aa). 1350–1357 is an ATP binding site; the sequence is APTGSGKT. The short motif at 1454 to 1457 is the DEIH box element; sequence DEIH. Positions 1545–1740 constitute a Helicase C-terminal 2 domain; that stretch reads PAFQAIRSHS…VLSDHLNAEI (196 aa). An SEC63 2 domain is found at 1813–2177; the sequence is PLTCGRIASY…LGLDQQYDIY (365 aa).

Belongs to the helicase family. As to quaternary structure, identified in the ASCC complex that contains ASCC1, ASCC2 and ASCC3. Functions as a scaffolding subunit that interacts directly with both ASCC1 and ASCC2. Interacts directly with ALKBH3, and thereby recruits ALKBH3 to the ASCC complex. Part of the ASC-1/TRIP4 complex, that contains TRIP4, ASCC1, ASCC2 and ASCC3. Part of the RQT (ribosome quality control trigger) complex, that contains ASCC2, ASCC3 and TRIP4. Associates with ribosomes; recruited to collided ribosomes. Interacts with ZCCHC4. Interacts with ZNF598. Interacts with RPS3.

It is found in the nucleus. The protein resides in the nucleus speckle. Its subcellular location is the cytoplasm. It localises to the cytosol. The catalysed reaction is Couples ATP hydrolysis with the unwinding of duplex DNA by translocating in the 3'-5' direction.. It carries out the reaction ATP + H2O = ADP + phosphate + H(+). ATPase involved both in DNA repair and rescue of stalled ribosomes. 3'-5' DNA helicase involved in repair of alkylated DNA: promotes DNA unwinding to generate single-stranded substrate needed for ALKBH3, enabling ALKBH3 to process alkylated N3-methylcytosine (3mC) within double-stranded regions. Also involved in activation of the ribosome quality control (RQC) pathway, a pathway that degrades nascent peptide chains during problematic translation. Drives the splitting of stalled ribosomes that are ubiquitinated in a ZNF598-dependent manner, as part of the ribosome quality control trigger (RQT) complex. Part of the ASC-1 complex that enhances NF-kappa-B, SRF and AP1 transactivation. This chain is Activating signal cointegrator 1 complex subunit 3 (Ascc3), found in Mus musculus (Mouse).